Reading from the N-terminus, the 568-residue chain is Sphingosine-1-phosphate lyase 1 (568 aa).

At 1-40 (MPGTDLLKLKDFEPYLEILESYSTKAKNYVNGYCTKYEPW) the chain is on the lumenal side. Residues 41–61 (QLIAWSVLCTLLIVWVYELIF) traverse the membrane as a helical; Signal-anchor for type III membrane protein segment. The Cytoplasmic segment spans residues 62 to 568 (QPESLWSRFK…NQMNGSPKPR (507 aa)). Lys-353 is modified (N6-(pyridoxal phosphate)lysine; alternate). The residue at position 353 (Lys-353) is an N6-acetyllysine; alternate. 2 positions are modified to 3'-nitrotyrosine: Tyr-356 and Tyr-366. Phosphoserine is present on Ser-564.

Belongs to the group II decarboxylase family. Sphingosine-1-phosphate lyase subfamily. Pyridoxal 5'-phosphate is required as a cofactor. In terms of tissue distribution, highest levels are found in liver, small intestine and thymus, followed by kidney, lung, heart, spleen and brain (at protein level). Also detected in stomach, testis and skeletal muscle (at protein level).

Its subcellular location is the endoplasmic reticulum membrane. It catalyses the reaction sphinganine 1-phosphate = hexadecanal + phosphoethanolamine. The catalysed reaction is sphing-4-enine 1-phosphate = (2E)-hexadecenal + phosphoethanolamine. It functions in the pathway lipid metabolism; sphingolipid metabolism. Cleaves phosphorylated sphingoid bases (PSBs), such as sphingosine-1-phosphate, into fatty aldehydes and phosphoethanolamine. Elevates stress-induced ceramide production and apoptosis. Required for global lipid homeostasis in liver and cholesterol homeostasis in fibroblasts. Involved in the regulation of pro-inflammatory response and neutrophil trafficking. Modulates neuronal autophagy via phosphoethanolamine production which regulates accumulation of aggregate-prone proteins such as APP. Seems to play a role in establishing neuronal contact sites and axonal maintenance. This is Sphingosine-1-phosphate lyase 1 from Mus musculus (Mouse).